A 195-amino-acid polypeptide reads, in one-letter code: ATP-dependent Clp protease proteolytic subunit 2 (195 aa).

S92 acts as the Nucleophile in catalysis. The active site involves H117.

This sequence belongs to the peptidase S14 family. In terms of assembly, fourteen ClpP subunits assemble into 2 heptameric rings which stack back to back to give a disk-like structure with a central cavity, resembling the structure of eukaryotic proteasomes.

The protein resides in the cytoplasm. The catalysed reaction is Hydrolysis of proteins to small peptides in the presence of ATP and magnesium. alpha-casein is the usual test substrate. In the absence of ATP, only oligopeptides shorter than five residues are hydrolyzed (such as succinyl-Leu-Tyr-|-NHMec, and Leu-Tyr-Leu-|-Tyr-Trp, in which cleavage of the -Tyr-|-Leu- and -Tyr-|-Trp bonds also occurs).. Its function is as follows. Cleaves peptides in various proteins in a process that requires ATP hydrolysis. Has a chymotrypsin-like activity. Plays a major role in the degradation of misfolded proteins. In Rhodococcus jostii (strain RHA1), this protein is ATP-dependent Clp protease proteolytic subunit 2.